A 247-amino-acid polypeptide reads, in one-letter code: Phosphoribosylaminoimidazole-succinocarboxamide synthase (247 aa).

This sequence belongs to the SAICAR synthetase family.

The enzyme catalyses 5-amino-1-(5-phospho-D-ribosyl)imidazole-4-carboxylate + L-aspartate + ATP = (2S)-2-[5-amino-1-(5-phospho-beta-D-ribosyl)imidazole-4-carboxamido]succinate + ADP + phosphate + 2 H(+). It functions in the pathway purine metabolism; IMP biosynthesis via de novo pathway; 5-amino-1-(5-phospho-D-ribosyl)imidazole-4-carboxamide from 5-amino-1-(5-phospho-D-ribosyl)imidazole-4-carboxylate: step 1/2. The protein is Phosphoribosylaminoimidazole-succinocarboxamide synthase of Herpetosiphon aurantiacus (strain ATCC 23779 / DSM 785 / 114-95).